The primary structure comprises 342 residues: Aristolochene synthase prx2 (342 aa).

Residues Asp-115, Asn-244, Ser-248, and Glu-252 each contribute to the Mg(2+) site. Residues Arg-340 and Tyr-341 each contribute to the (2E,6E)-farnesyl diphosphate site.

This sequence belongs to the terpene synthase family. In terms of assembly, homodimer. It depends on Mg(2+) as a cofactor.

It catalyses the reaction (2E,6E)-farnesyl diphosphate = (+)-aristolochene + diphosphate. The protein operates within sesquiterpene biosynthesis; aristolochene biosynthesis; aristolochene from farnesyl diphosphate: step 1/1. Aristolochene synthase; part of the gene cluster that mediates the biosynthesis of PR-toxin, a bicyclic sesquiterpene belonging to the eremophilane class and acting as a mycotoxin. The first step of the pathway is catalyzed by the aristolochene synthase which performs the cyclization of trans,trans-farnesyl diphosphate (FPP) to the bicyclic sesquiterpene aristolochene. Following the formation of aristolochene, the non-oxygenated aristolochene is converted to the trioxygenated intermediate eremofortin B, via 7-epi-neopetasone. This conversion appears to involve three enzymes, a hydroxysterol oxidase-like enzyme, the quinone-oxidase prx3 that forms the quinone-type-structure in the bicyclic nucleus of aristolochene with the C8-oxo group and the C-3 hydroxyl group, and the P450 monooxygenase prx9 that introduces the epoxide at the double bond between carbons 1 and 2. No monoxy or dioxy-intermediates have been reported to be released to the broth, so these three early oxidative reactions may be coupled together. Eremofortin B is further oxidized by another P450 monooxygenase, that introduces a second epoxide between carbons 7 and 11 prior to acetylation to eremofortin A by the acetyltransferase prx11. The second epoxidation may be performed by a second P450 monooxygenase. After the acetylation step, the conversion of eremofortin A to eremofortin C and then to PR-toxin requires only two enzymes. First the conversion of eremofortin A to eremofortin C proceeds by oxidation of the side chain of the molecule at C-12 and is catalyzed by the short-chain oxidoreductase prx1. The cytochrome P450 monooxygenase prx8 also plays a role in this step. The primary alcohol formed at C-12 is finally oxidized by the short-chain alcohol dehydrogenase prx4 that forms PR-toxin. The sequence is that of Aristolochene synthase prx2 from Penicillium rubens (strain ATCC 28089 / DSM 1075 / NRRL 1951 / Wisconsin 54-1255) (Penicillium chrysogenum).